The following is a 181-amino-acid chain: Sodium/potassium-transporting ATPase subunit beta-1-interacting protein 3 (181 aa).

4 consecutive transmembrane segments (helical) span residues 5 to 22 (TGRC…LVAL), 35 to 55 (APIL…FGTI), 62 to 82 (IVAY…IICF), and 151 to 171 (AVQI…ISVI).

This sequence belongs to the NKAIN family. As to quaternary structure, interacts with atp1b1 C-terminus.

It is found in the cell membrane. This is Sodium/potassium-transporting ATPase subunit beta-1-interacting protein 3 (nkain3) from Xenopus tropicalis (Western clawed frog).